The sequence spans 304 residues: MENVKNFVKLFVEYLQIEKNYSQYTIVNYVDSIEEFETFLRVQGINGFEEAAYQDTRIFLTEAYEKGLSRRTISKKISALRSFYKFLMREKLIEENPFQLVHLPKQEKRIPKFLYQKELEELFEVSDISQPAGMRDQALLELLYATGMRVSECCSITINDVDLFMDTVLVHGKGKKQRYIPFGSYAREALKVYMNSGRQCLLMKAKEPHDLLFVNQRGGPLTARGIRHILSGLVQKASSTLHIHPHMLRHTFATHLLNEGADLRSVQELLGHSNLSSTQIYTHVSKEMLRNTYMSHHPRAFKKN.

The Core-binding (CB) domain occupies 2-88; it reads ENVKNFVKLF…ALRSFYKFLM (87 aa). In terms of domain architecture, Tyr recombinase spans 109-294; that stretch reads RIPKFLYQKE…SKEMLRNTYM (186 aa). Active-site residues include R149, K173, H246, R249, and H272. Catalysis depends on Y281, which acts as the O-(3'-phospho-DNA)-tyrosine intermediate.

Belongs to the 'phage' integrase family. XerC subfamily. Forms a cyclic heterotetrameric complex composed of two molecules of XerC and two molecules of XerD.

It localises to the cytoplasm. In terms of biological role, site-specific tyrosine recombinase, which acts by catalyzing the cutting and rejoining of the recombining DNA molecules. The XerC-XerD complex is essential to convert dimers of the bacterial chromosome into monomers to permit their segregation at cell division. It also contributes to the segregational stability of plasmids. The sequence is that of Tyrosine recombinase XerC from Bacillus subtilis (strain 168).